Reading from the N-terminus, the 173-residue chain is Pathogenesis-related protein 1A/1B (173 aa).

Residues 1–20 (MSTSAVLFLLLAVFAAGASA) form the signal peptide.

Belongs to the thaumatin family.

This chain is Pathogenesis-related protein 1A/1B, found in Hordeum vulgare (Barley).